A 793-amino-acid chain; its full sequence is Methionine--tRNA ligase (793 aa).

Positions 11-21 (PYVNNFPHLGN) match the 'HIGH' region motif. 4 residues coordinate Zn(2+): C142, C145, C155, and C158. Positions 334 to 338 (KFSKS) match the 'KMSKS' region motif. ATP is bound at residue K337. A compositionally biased stretch (basic and acidic residues) spans 581-590 (SQKDRKKSEK). Residues 581–610 (SQKDRKKSEKGCSACKDSGSSKSDAAASSA) form a disordered region. The segment covering 591–610 (GCSACKDSGSSKSDAAASSA) has biased composition (low complexity). Residues 622 to 727 (FSKKIALKTA…PWAAPGTPVI (106 aa)) form the tRNA-binding domain.

This sequence belongs to the class-I aminoacyl-tRNA synthetase family. MetG type 1 subfamily. As to quaternary structure, homodimer. The cofactor is Zn(2+).

Its subcellular location is the cytoplasm. It catalyses the reaction tRNA(Met) + L-methionine + ATP = L-methionyl-tRNA(Met) + AMP + diphosphate. Functionally, is required not only for elongation of protein synthesis but also for the initiation of all mRNA translation through initiator tRNA(fMet) aminoacylation. This chain is Methionine--tRNA ligase, found in Treponema denticola (strain ATCC 35405 / DSM 14222 / CIP 103919 / JCM 8153 / KCTC 15104).